We begin with the raw amino-acid sequence, 179 residues long: uncharacterized protein (179 aa).

A coiled-coil region spans residues 139 to 172 (IEDLGKYIKSDRIEKEALREELEKILNTLVKHLE).

This is an uncharacterized protein from Methanocaldococcus jannaschii (strain ATCC 43067 / DSM 2661 / JAL-1 / JCM 10045 / NBRC 100440) (Methanococcus jannaschii).